Here is a 734-residue protein sequence, read N- to C-terminus: MSWESGAGPGLGSQGMDLVWSAWYGKCVKGKGSLPLSAHGIVVAWLSRAEWDQVTVYLFCDDHKLQRYALNRITVWRSRSGNELPLAVASTADLIRCKLLDVTGGLGTDELRLLYGMALVRFVNLISERKTKFAKVPLKCLAQEVNIPDWIVDLRHELTHKKMPHINDCRRGCYFVLDWLQKTYWCRQLENSLRETWELEEFREGIEEEDQEEDKNIVVDDITEQKPEPQDDGKSTESDVKADGDSKGSEEVDSHCKKALSHKELYERARELLVSYEEEQFTVLEKFRYLPKAIKAWNNPSPRVECVLAELKGVTCENREAVLDAFLDDGFLVPTFEQLAALQIEYEDGQTEVQRGEGTDPKSHKNVDLNDVLVPKPFSQFWQPLLRGLHSQNFTQALLERMLSELPALGISGIRPTYILRWTVELIVANTKTGRNARRFSAGQWEARRGWRLFNCSASLDWPRMVESCLGSPCWASPQLLRIIFKAMGQGLPDEEQEKLLRICSIYTQSGENSLVQEGSEASPIGKSPYTLDSLYWSVKPASSSFGSEAKAQQQEEQGSVNDVKEEEKEEKEVLPDQVEEEEENDDQEEEEEDEDDEDDEEEDRMEVGPFSTGQESPTAENARLLAQKRGALQGSAWQVSSEDVRWDTFPLGRMPGQTEDPAELMLENYDTMYLLDQPVLEQRLEPSTCKTDTLGLSCGVGSGNCSNSSSSNFEGLLWSQGQLHGLKTGLQLF.

Residues 204 to 255 form a disordered region; the sequence is EGIEEEDQEEDKNIVVDDITEQKPEPQDDGKSTESDVKADGDSKGSEEVDSH. Residues 214-255 show a composition bias toward basic and acidic residues; sequence DKNIVVDDITEQKPEPQDDGKSTESDVKADGDSKGSEEVDSH. Glycyl lysine isopeptide (Lys-Gly) (interchain with G-Cter in SUMO2) cross-links involve residues Lys215 and Lys226. Phosphoserine is present on residues Ser441, Ser523, and Ser560. Residues 547-561 are compositionally biased toward polar residues; that stretch reads GSEAKAQQQEEQGSV. The interval 547-619 is disordered; the sequence is GSEAKAQQQE…PFSTGQESPT (73 aa). Positions 563-575 are enriched in basic and acidic residues; it reads DVKEEEKEEKEVL. Acidic residues predominate over residues 578-605; that stretch reads QVEEEEENDDQEEEEEDEDDEDDEEEDR. Ser617 carries the post-translational modification Phosphoserine. The interaction with NOL9 stretch occupies residues 636 to 655; that stretch reads SAWQVSSEDVRWDTFPLGRM.

Belongs to the LAS1 family. Component of some MLL1/MLL complex, at least composed of the core components KMT2A/MLL1, ASH2L, HCFC1/HCF1, WDR5 and RBBP5, as well as the facultative components BACC1, CHD8, E2F6, HSP70, INO80C, KANSL1, LAS1L, MAX, MCRS1, MGA, KAT8/MOF, PELP1, PHF20, PRP31, RING2, RUVB1/TIP49A, RUVB2/TIP49B, SENP3, TAF1, TAF4, TAF6, TAF7, TAF9 and TEX10. Component of the 5FMC complex, at least composed of PELP1, LAS1L, TEX10, WDR18 and SENP3; the complex interacts with methylated CHTOP and ZNF148. Interacts with NOL9 to form an ITS2 pre-rRNA endonuclease-kinase complex.

The protein localises to the nucleus. The protein resides in the nucleolus. It is found in the nucleoplasm. Its subcellular location is the cytoplasm. Functionally, required for the synthesis of the 60S ribosomal subunit and maturation of the 28S rRNA. Functions as a component of the Five Friends of Methylated CHTOP (5FMC) complex; the 5FMC complex is recruited to ZNF148 by methylated CHTOP, leading to desumoylation of ZNF148 and subsequent transactivation of ZNF148 target genes. Required for the efficient pre-rRNA processing at both ends of internal transcribed spacer 2 (ITS2). The chain is Ribosomal biogenesis protein LAS1L (LAS1L) from Homo sapiens (Human).